The chain runs to 96 residues: Small ribosomal subunit protein bS6 (96 aa).

This sequence belongs to the bacterial ribosomal protein bS6 family.

In terms of biological role, binds together with bS18 to 16S ribosomal RNA. The chain is Small ribosomal subunit protein bS6 from Nocardioides sp. (strain ATCC BAA-499 / JS614).